A 454-amino-acid polypeptide reads, in one-letter code: Chromosomal replication initiator protein DnaA (454 aa).

Positions 1 to 71 (MTKEQWGQLQ…HEVRQEDPAV (71 aa)) are domain I, interacts with DnaA modulators. The tract at residues 71 to 112 (VRRLRFAVPSHVNATTKPARPAQATAPRAPAEKTPRSTLSTA) is domain II. The disordered stretch occupies residues 82 to 108 (VNATTKPARPAQATAPRAPAEKTPRST). Over residues 84–99 (ATTKPARPAQATAPRA) the composition is skewed to low complexity. The segment at 113-334 (PLDARFTFDN…GALTRLCAFA (222 aa)) is domain III, AAA+ region. ATP is bound by residues G157, G159, K160, and T161. The interval 335-454 (SLVGREIDME…LELLRRALEE (120 aa)) is domain IV, binds dsDNA.

Belongs to the DnaA family. In terms of assembly, oligomerizes as a right-handed, spiral filament on DNA at oriC.

It localises to the cytoplasm. Its function is as follows. Plays an essential role in the initiation and regulation of chromosomal replication. ATP-DnaA binds to the origin of replication (oriC) to initiate formation of the DNA replication initiation complex once per cell cycle. Binds the DnaA box (a 9 base pair repeat at the origin) and separates the double-stranded (ds)DNA. Forms a right-handed helical filament on oriC DNA; dsDNA binds to the exterior of the filament while single-stranded (ss)DNA is stabiized in the filament's interior. The ATP-DnaA-oriC complex binds and stabilizes one strand of the AT-rich DNA unwinding element (DUE), permitting loading of DNA polymerase. After initiation quickly degrades to an ADP-DnaA complex that is not apt for DNA replication. Binds acidic phospholipids. In Roseobacter denitrificans (strain ATCC 33942 / OCh 114) (Erythrobacter sp. (strain OCh 114)), this protein is Chromosomal replication initiator protein DnaA.